Consider the following 167-residue polypeptide: Large ribosomal subunit protein bL9 (167 aa).

It belongs to the bacterial ribosomal protein bL9 family.

Its function is as follows. Binds to the 23S rRNA. The polypeptide is Large ribosomal subunit protein bL9 (Chlamydia muridarum (strain MoPn / Nigg)).